Here is a 204-residue protein sequence, read N- to C-terminus: Probable UMP-CMP kinase 1 (204 aa).

Residue 31-36 (GSGKGT) participates in ATP binding. The NMP stretch occupies residues 51–80 (SAGDLLRAEIKSGSEFGAMIQSMIAEGRIV). A ribonucleoside 5'-phosphate-binding positions include Arg57, 78–80 (RIV), and 105–108 (GFPR). Residue Asn112 coordinates CMP. The interval 143–151 (SRNQGREDD) is LID. Arg144 is a binding site for ATP. A ribonucleoside 5'-phosphate-binding residues include Arg148 and Arg159. ATP is bound at residue Lys187.

This sequence belongs to the adenylate kinase family. UMP-CMP kinase subfamily. As to quaternary structure, monomer. The cofactor is Mg(2+).

It localises to the cytoplasm. It is found in the nucleus. The enzyme catalyses CMP + ATP = CDP + ADP. It carries out the reaction dCMP + ATP = dCDP + ADP. It catalyses the reaction UMP + ATP = UDP + ADP. Catalyzes the phosphorylation of pyrimidine nucleoside monophosphates at the expense of ATP. Plays an important role in de novo pyrimidine nucleotide biosynthesis. Has preference for UMP and CMP as phosphate acceptors. This is Probable UMP-CMP kinase 1 (UMK1) from Arabidopsis thaliana (Mouse-ear cress).